Here is a 236-residue protein sequence, read N- to C-terminus: Large ribosomal subunit protein uL1 (236 aa).

The protein belongs to the universal ribosomal protein uL1 family. In terms of assembly, part of the 50S ribosomal subunit.

In terms of biological role, binds directly to 23S rRNA. The L1 stalk is quite mobile in the ribosome, and is involved in E site tRNA release. Functionally, protein L1 is also a translational repressor protein, it controls the translation of the L11 operon by binding to its mRNA. The protein is Large ribosomal subunit protein uL1 of Heliobacterium modesticaldum (strain ATCC 51547 / Ice1).